The sequence spans 230 residues: 7-cyano-7-deazaguanine synthase (230 aa).

8-18 (LSGGMDSAVVT) is an ATP binding site. Cys-186, Cys-196, Cys-199, and Cys-202 together coordinate Zn(2+).

The protein belongs to the QueC family. The cofactor is Zn(2+).

The catalysed reaction is 7-carboxy-7-deazaguanine + NH4(+) + ATP = 7-cyano-7-deazaguanine + ADP + phosphate + H2O + H(+). Its pathway is purine metabolism; 7-cyano-7-deazaguanine biosynthesis. In terms of biological role, catalyzes the ATP-dependent conversion of 7-carboxy-7-deazaguanine (CDG) to 7-cyano-7-deazaguanine (preQ(0)). The chain is 7-cyano-7-deazaguanine synthase from Xylella fastidiosa (strain M23).